The sequence spans 637 residues: MNANPTFLAATAEVDAAAVAPLPKSRKVYETGSRPDIRVPFREIEQADTPTMFGGEKNPPLTVYDTSGPYTDPQASIDIRRGLPALRRAWIEERGDTEVLDGPTSDYGKERLTDPKLTAMRFDLQRPPRRARAGANVTQMHYARRGIVTPEMEFIALRENLRREHYLETLRASGPDGEKLAKRLLRQHPGQSFGAALPSAITPEFVREEVARGRAIIPANINHPEIEPMIIGRNFLVKINANIGNSAVSSGIGEEVEKMTWAIRWGGDTVMDLSTGKHIHETREWIIRNSPVPIGTVPIYQALEKVDGKAEELTWEIFRDTLIEQAEQGVDYFTIHAGVRLPFIPMTADRMTGIVSRGGSIMAKWCLAHHKESFLYERFEEICEIMKAYDVSFSLGDGLRPGSGYDANDEAQFAELKTLGELTQVAWKHDVQVMIEGPGHVPMQMIKENMELQLKHCDEAPFYTLGPLTTDIAPGYDHITSGIGAALIGWYGTAMLCYVTPKEHLGLPNKKDVKDGIITYKIAAHAADLAKGHPGAAIRDNALSKARFEFRWDDQFNLGLDPDTAKEFHDETLPKDSMKVAHFCSMCGPHFCSMKITQDVRDYAAAQGVSEKDALQQGMQEKAVEFVKKGAEVYHRT.

Substrate contacts are provided by residues Asn-242, Met-271, Tyr-300, His-336, 356–358, 397–400, and Glu-436; these read SRG and DGLR. His-440 is a binding site for Zn(2+). Substrate is bound at residue Tyr-463. Residue His-504 coordinates Zn(2+). [4Fe-4S] cluster-binding residues include Cys-584, Cys-587, and Cys-592.

Belongs to the ThiC family. Homodimer. [4Fe-4S] cluster is required as a cofactor.

The enzyme catalyses 5-amino-1-(5-phospho-beta-D-ribosyl)imidazole + S-adenosyl-L-methionine = 4-amino-2-methyl-5-(phosphooxymethyl)pyrimidine + CO + 5'-deoxyadenosine + formate + L-methionine + 3 H(+). The protein operates within cofactor biosynthesis; thiamine diphosphate biosynthesis. In terms of biological role, catalyzes the synthesis of the hydroxymethylpyrimidine phosphate (HMP-P) moiety of thiamine from aminoimidazole ribotide (AIR) in a radical S-adenosyl-L-methionine (SAM)-dependent reaction. This Bordetella pertussis (strain Tohama I / ATCC BAA-589 / NCTC 13251) protein is Phosphomethylpyrimidine synthase.